Reading from the N-terminus, the 221-residue chain is UPF0758 protein KPN78578_39390 (221 aa).

The MPN domain maps to 99 to 221 (ALVTPSMTRE…YVSFAERGWI (123 aa)). Positions 170, 172, and 183 each coordinate Zn(2+). The JAMM motif signature appears at 170–183 (HNHPSGSPEPSQAD).

It belongs to the UPF0758 family. YicR subfamily.

The sequence is that of UPF0758 protein KPN78578_39390 from Klebsiella pneumoniae subsp. pneumoniae (strain ATCC 700721 / MGH 78578).